A 206-amino-acid chain; its full sequence is Adenylate kinase (206 aa).

The segment at 1 to 21 (MSQPKILLLGAPGAGKGTQSS) is disordered. 13–18 (GAGKGT) contributes to the ATP binding site. Residues 33 to 61 (TTGDALRANKDMETEHGTPREFMEAGELV) form an NMP region. AMP-binding positions include Thr34, Arg39, 59-61 (ELV), 84-87 (GYPR), and Gln91. The interval 120 to 153 (GRRMDPETGDIYHTEFNMPDDEEVRERLVQRDDD) is LID. Residues Arg121 and 130–131 (IY) contribute to the ATP site. Positions 150 and 161 each coordinate AMP. Ala189 lines the ATP pocket.

Belongs to the adenylate kinase family. In terms of assembly, monomer.

The protein resides in the cytoplasm. The catalysed reaction is AMP + ATP = 2 ADP. Its pathway is purine metabolism; AMP biosynthesis via salvage pathway; AMP from ADP: step 1/1. In terms of biological role, catalyzes the reversible transfer of the terminal phosphate group between ATP and AMP. Plays an important role in cellular energy homeostasis and in adenine nucleotide metabolism. The polypeptide is Adenylate kinase (Natronomonas pharaonis (strain ATCC 35678 / DSM 2160 / CIP 103997 / JCM 8858 / NBRC 14720 / NCIMB 2260 / Gabara) (Halobacterium pharaonis)).